Consider the following 154-residue polypeptide: Large ribosomal subunit protein uL16 (154 aa).

This sequence belongs to the universal ribosomal protein uL16 family. Part of the 50S ribosomal subunit.

Binds 23S rRNA and is also seen to make contacts with the A and possibly P site tRNAs. The chain is Large ribosomal subunit protein uL16 from Synechococcus sp. (strain RCC307).